The sequence spans 182 residues: Crossover junction endodeoxyribonuclease RuvC (182 aa).

Residues Asp7, Glu69, and Asp141 contribute to the active site. Positions 7, 69, and 141 each coordinate Mg(2+).

It belongs to the RuvC family. Homodimer which binds Holliday junction (HJ) DNA. The HJ becomes 2-fold symmetrical on binding to RuvC with unstacked arms; it has a different conformation from HJ DNA in complex with RuvA. In the full resolvosome a probable DNA-RuvA(4)-RuvB(12)-RuvC(2) complex forms which resolves the HJ. The cofactor is Mg(2+).

Its subcellular location is the cytoplasm. The enzyme catalyses Endonucleolytic cleavage at a junction such as a reciprocal single-stranded crossover between two homologous DNA duplexes (Holliday junction).. The RuvA-RuvB-RuvC complex processes Holliday junction (HJ) DNA during genetic recombination and DNA repair. Endonuclease that resolves HJ intermediates. Cleaves cruciform DNA by making single-stranded nicks across the HJ at symmetrical positions within the homologous arms, yielding a 5'-phosphate and a 3'-hydroxyl group; requires a central core of homology in the junction. The consensus cleavage sequence is 5'-(A/T)TT(C/G)-3'. Cleavage occurs on the 3'-side of the TT dinucleotide at the point of strand exchange. HJ branch migration catalyzed by RuvA-RuvB allows RuvC to scan DNA until it finds its consensus sequence, where it cleaves and resolves the cruciform DNA. The protein is Crossover junction endodeoxyribonuclease RuvC of Albidiferax ferrireducens (strain ATCC BAA-621 / DSM 15236 / T118) (Rhodoferax ferrireducens).